A 283-amino-acid polypeptide reads, in one-letter code: Elongation factor Ts (283 aa).

Residues 82–85 are involved in Mg(2+) ion dislocation from EF-Tu; that stretch reads TDFV.

The protein belongs to the EF-Ts family.

The protein resides in the cytoplasm. In terms of biological role, associates with the EF-Tu.GDP complex and induces the exchange of GDP to GTP. It remains bound to the aminoacyl-tRNA.EF-Tu.GTP complex up to the GTP hydrolysis stage on the ribosome. This Photorhabdus laumondii subsp. laumondii (strain DSM 15139 / CIP 105565 / TT01) (Photorhabdus luminescens subsp. laumondii) protein is Elongation factor Ts.